The following is a 1188-amino-acid chain: Integrin alpha-11 (1188 aa).

The N-terminal stretch at 1-22 (MDLPRGLVVAWALSLWPGFTDT) is a signal peptide. The Extracellular portion of the chain corresponds to 23 to 1141 (FNMDTRKPRV…ISKQEDWQVP (1119 aa)). FG-GAP repeat units lie at residues 24–85 (NMDT…NCTK) and 91–151 (VTLS…FSKT). The cysteines at positions 76 and 83 are disulfide-linked. N82 and N95 each carry an N-linked (GlcNAc...) asparagine glycan. 2 disulfides stabilise this stretch: C121–C139 and C129–C159. A VWFA domain is found at 164–345 (DIVIVLDGSN…AALKDIVDAL (182 aa)). N-linked (GlcNAc...) asparagine glycans are attached at residues N291, N331, N358, N449, and N462. 5 FG-GAP repeats span residues 355–406 (TNKN…VIPL), 411–461 (LKEF…TMHN), 462–527 (NRSL…LFVY), 528–586 (NGTL…SILK), and 590–650 (QRIT…FEPS). 4 residues coordinate Ca(2+): D488, D490, D492, and D496. A glycan (N-linked (GlcNAc...) asparagine) is linked at N528. Ca(2+) is bound by residues D551, N553, D555, D559, D613, N615, D617, and D621. N642 carries N-linked (GlcNAc...) asparagine glycosylation. Cystine bridges form between C659–C668, C674–C729, and C781–C787. N694 is a glycosylation site (N-linked (GlcNAc...) asparagine). N857 carries N-linked (GlcNAc...) asparagine glycosylation. C881 and C893 are joined by a disulfide. N894, N973, N1031, N1039, and N1059 each carry an N-linked (GlcNAc...) asparagine glycan. The chain crosses the membrane as a helical span at residues 1142 to 1164 (IWIIVGSTLGGLLLLALLVLALW). Residues 1165-1188 (KLGFFRSARRRREPGLDPTPKVLE) lie on the Cytoplasmic side of the membrane.

Belongs to the integrin alpha chain family. Heterodimer of an alpha and a beta subunit. Alpha-11 associates with beta-1. Interacts with RAB21. In terms of tissue distribution, according to PubMed:10464311, highest levels of expression in uterus and heart, intermediate levels in skeletal muscle and intermediate to low levels in pancreas, kidney and placenta. According to PubMed:10486209, also found in brain, colon, lung, small intestine, stomach, testis, salivary glands, thyroid glands and prostate. Very low levels in peripheral blood lymphocytes, fetal brain and fetal liver.

It is found in the membrane. In terms of biological role, integrin alpha-11/beta-1 is a receptor for collagen. This is Integrin alpha-11 (ITGA11) from Homo sapiens (Human).